Consider the following 327-residue polypeptide: Ornithine carbamoyltransferase 2, anabolic (327 aa).

Carbamoyl phosphate contacts are provided by residues Arg-109 and His-136–Gln-139. L-ornithine-binding positions include Asn-168, Asp-232, and Ser-236–Met-237. Carbamoyl phosphate-binding positions include Cys-273–Leu-274 and Arg-313.

The protein belongs to the aspartate/ornithine carbamoyltransferase superfamily. OTCase family. In terms of assembly, homotrimer.

Its subcellular location is the cytoplasm. The catalysed reaction is carbamoyl phosphate + L-ornithine = L-citrulline + phosphate + H(+). Its pathway is amino-acid biosynthesis; L-arginine biosynthesis; L-arginine from L-ornithine and carbamoyl phosphate: step 1/3. Its function is as follows. Plays an important role in the survival and pathogenicity of P.syringae. Phaseolotoxin is a virulence factor that inhibits the catalysis of the host OTCase. Phaseolotoxin-producing bacteria do not suffer autointoxication because they possess the anabolic OTCase ArgK which can function even in the presence of phaseolotoxin. Reversibly catalyzes the transfer of the carbamoyl group from carbamoyl phosphate (CP) to the N(epsilon) atom of ornithine (ORN) to produce L-citrulline, which is a substrate for argininosuccinate synthetase, the enzyme involved in the final step in arginine biosynthesis. This is Ornithine carbamoyltransferase 2, anabolic from Pseudomonas savastanoi pv. phaseolicola (Pseudomonas syringae pv. phaseolicola).